The following is a 359-amino-acid chain: MRAYNFCAGPAALPTAVLEKAQQELLDWQGKGLSIMEMSHRSKDYVAVAEKAEADLRKLMNIPENYQVLFLQGGASLQFSAIPMNLLGKNSKADYIHTGIWSEKALKEAQRYGDINVIEAGTSIDGKLAIKNQSEWNLSQDAAYVHYAENETIGGIQFADIPDVNVPLVSDLSSSILSAPLDVSKFGLIYAGAQKNIGPAGLTIVIVRDDLLDQSRSDIPSILKYSAQAKNGSMVNTPATYAWYLSGLVFEWLLEQGGVDAIHQVNLEKAKLLYGYIDSSDFYNNPIAVPNRSIMNVPFTLADEALEKLFLQEAEENHLLNLAGHRSVGGMRASIYNAVPLEGVQALVNFMDTFVQKHG.

Arginine 41 lines the L-glutamate pocket. Pyridoxal 5'-phosphate-binding positions include 75–76, tryptophan 101, threonine 152, aspartate 171, and glutamine 194; that span reads AS. N6-(pyridoxal phosphate)lysine is present on lysine 195. 236–237 is a binding site for pyridoxal 5'-phosphate; that stretch reads NT.

It belongs to the class-V pyridoxal-phosphate-dependent aminotransferase family. SerC subfamily. As to quaternary structure, homodimer. Pyridoxal 5'-phosphate is required as a cofactor.

The protein resides in the cytoplasm. It carries out the reaction O-phospho-L-serine + 2-oxoglutarate = 3-phosphooxypyruvate + L-glutamate. It catalyses the reaction 4-(phosphooxy)-L-threonine + 2-oxoglutarate = (R)-3-hydroxy-2-oxo-4-phosphooxybutanoate + L-glutamate. It functions in the pathway amino-acid biosynthesis; L-serine biosynthesis; L-serine from 3-phospho-D-glycerate: step 2/3. The protein operates within cofactor biosynthesis; pyridoxine 5'-phosphate biosynthesis; pyridoxine 5'-phosphate from D-erythrose 4-phosphate: step 3/5. Catalyzes the reversible conversion of 3-phosphohydroxypyruvate to phosphoserine and of 3-hydroxy-2-oxo-4-phosphonooxybutanoate to phosphohydroxythreonine. This is Phosphoserine aminotransferase from Acinetobacter baylyi (strain ATCC 33305 / BD413 / ADP1).